We begin with the raw amino-acid sequence, 128 residues long: S-adenosylmethionine decarboxylase proenzyme (128 aa).

Ser-61 (schiff-base intermediate with substrate; via pyruvic acid) is an active-site residue. A Pyruvic acid (Ser); by autocatalysis modification is found at Ser-61. The active-site Proton acceptor; for processing activity is the His-66. Catalysis depends on Cys-81, which acts as the Proton donor; for catalytic activity.

Belongs to the prokaryotic AdoMetDC family. Type 1 subfamily. Heterotetramer of two alpha and two beta chains arranged as a dimer of alpha/beta heterodimers. Requires pyruvate as cofactor. In terms of processing, is synthesized initially as an inactive proenzyme. Formation of the active enzyme involves a self-maturation process in which the active site pyruvoyl group is generated from an internal serine residue via an autocatalytic post-translational modification. Two non-identical subunits are generated from the proenzyme in this reaction, and the pyruvate is formed at the N-terminus of the alpha chain, which is derived from the carboxyl end of the proenzyme. The post-translation cleavage follows an unusual pathway, termed non-hydrolytic serinolysis, in which the side chain hydroxyl group of the serine supplies its oxygen atom to form the C-terminus of the beta chain, while the remainder of the serine residue undergoes an oxidative deamination to produce ammonia and the pyruvoyl group blocking the N-terminus of the alpha chain.

The enzyme catalyses S-adenosyl-L-methionine + H(+) = S-adenosyl 3-(methylsulfanyl)propylamine + CO2. It functions in the pathway amine and polyamine biosynthesis; S-adenosylmethioninamine biosynthesis; S-adenosylmethioninamine from S-adenosyl-L-methionine: step 1/1. Its function is as follows. Catalyzes the decarboxylation of S-adenosylmethionine to S-adenosylmethioninamine (dcAdoMet), the propylamine donor required for the synthesis of the polyamines spermine and spermidine from the diamine putrescine. This is S-adenosylmethionine decarboxylase proenzyme from Parasynechococcus marenigrum (strain WH8102).